The following is a 340-amino-acid chain: Putative phosphatidylcholine:ceramide cholinephosphotransferase 3 (340 aa).

The tract at residues Met-1–Asn-25 is disordered. Helical transmembrane passes span Cys-36–Tyr-56, Ser-81–Ile-101, Leu-178–Leu-198, and Ile-202–Ile-222. Residue His-183 is part of the active site. Topologically, residues Ser-223–Cys-340 are cytoplasmic. Residues His-226 and Asp-230 contribute to the active site. The tract at residues Ser-294–Val-313 is disordered.

Belongs to the sphingomyelin synthase family.

The protein localises to the membrane. The catalysed reaction is an N-acyl-sphingoid base + a 1,2-diacyl-sn-glycero-3-phosphocholine = an N-(acyl)-sphingosylphosphocholine + a 1,2-diacyl-sn-glycerol. The enzyme catalyses an N-acylsphing-4-enine + a 1,2-diacyl-sn-glycero-3-phosphocholine = a sphingomyelin + a 1,2-diacyl-sn-glycerol. It carries out the reaction an N-acyl-15-methylhexadecasphing-4-enine + a 1,2-diacyl-sn-glycero-3-phosphocholine = an N-acyl-15-methylhexadecasphing-4-enine-1-phosphocholine + a 1,2-diacyl-sn-glycerol. It participates in lipid metabolism; sphingolipid metabolism. Functionally, bidirectional lipid cholinephosphotransferase capable of converting phosphatidylcholine (PC) and ceramide to sphingomyelin (SM) and diacylglycerol (DAG) and vice versa. Direction is dependent on the relative concentrations of DAG and ceramide as phosphocholine acceptors. Directly and specifically recognizes the choline head group on the substrate. Also requires two fatty chains on the choline-P donor molecule in order to be recognized efficiently as a substrate. Does not function strictly as a SM synthase. C.elegans contains specific sphingoid bases, which are unique or different in structure compared to the sphingoid bases found in other animals. Two examples of these distinctive compounds are: 15-methylhexadecasphinganine and 15-methylhexadecasphing-4-enine. This is Putative phosphatidylcholine:ceramide cholinephosphotransferase 3 (sms-3) from Caenorhabditis elegans.